The sequence spans 95 residues: Small ribosomal subunit protein bS18 (95 aa).

The protein belongs to the bacterial ribosomal protein bS18 family. In terms of assembly, part of the 30S ribosomal subunit. Forms a tight heterodimer with protein bS6.

Functionally, binds as a heterodimer with protein bS6 to the central domain of the 16S rRNA, where it helps stabilize the platform of the 30S subunit. This is Small ribosomal subunit protein bS18 from Rickettsia canadensis (strain McKiel).